Here is a 69-residue protein sequence, read N- to C-terminus: MKPFLVTLAVLLLFFQVTAVGSIEKCWNFRGSCRDECLKNEKVYVFCMSGKLCCLKPKDQPHLPQRTKN.

The N-terminal stretch at 1-19 (MKPFLVTLAVLLLFFQVTA) is a signal peptide. 3 disulfides stabilise this stretch: cysteine 26-cysteine 53, cysteine 33-cysteine 47, and cysteine 37-cysteine 54.

The protein belongs to the beta-defensin family.

It is found in the secreted. Has antibacterial activity. In Macaca mulatta (Rhesus macaque), this protein is Beta-defensin 122 (DEFB122).